A 1318-amino-acid polypeptide reads, in one-letter code: DNA-directed RNA polymerase subunit beta' (1318 aa).

Positions 221, 295, 302, and 305 each coordinate Zn(2+).

Belongs to the RNA polymerase beta' chain family. RpoC2 subfamily. In cyanobacteria the RNAP catalytic core is composed of 2 alpha, 1 beta, 1 beta', 1 gamma and 1 omega subunit. When a sigma factor is associated with the core the holoenzyme is formed, which can initiate transcription. Zn(2+) serves as cofactor.

It catalyses the reaction RNA(n) + a ribonucleoside 5'-triphosphate = RNA(n+1) + diphosphate. In terms of biological role, DNA-dependent RNA polymerase catalyzes the transcription of DNA into RNA using the four ribonucleoside triphosphates as substrates. The polypeptide is DNA-directed RNA polymerase subunit beta' (Synechococcus elongatus (strain ATCC 33912 / PCC 7942 / FACHB-805) (Anacystis nidulans R2)).